Consider the following 404-residue polypeptide: Cysteine desulfurase IscS (404 aa).

Residues 75–76 (AT), asparagine 155, glutamine 183, and 203–205 (SGH) each bind pyridoxal 5'-phosphate. Lysine 206 carries the post-translational modification N6-(pyridoxal phosphate)lysine. Threonine 243 lines the pyridoxal 5'-phosphate pocket. Cysteine 328 acts as the Cysteine persulfide intermediate in catalysis. Cysteine 328 is a binding site for [2Fe-2S] cluster.

Belongs to the class-V pyridoxal-phosphate-dependent aminotransferase family. NifS/IscS subfamily. Homodimer. Forms a heterotetramer with IscU, interacts with other sulfur acceptors. Requires pyridoxal 5'-phosphate as cofactor.

It localises to the cytoplasm. The enzyme catalyses (sulfur carrier)-H + L-cysteine = (sulfur carrier)-SH + L-alanine. Its pathway is cofactor biosynthesis; iron-sulfur cluster biosynthesis. Its function is as follows. Master enzyme that delivers sulfur to a number of partners involved in Fe-S cluster assembly, tRNA modification or cofactor biosynthesis. Catalyzes the removal of elemental sulfur and selenium atoms from cysteine and selenocysteine to produce alanine. Functions as a sulfur delivery protein for Fe-S cluster synthesis onto IscU, an Fe-S scaffold assembly protein, as well as other S acceptor proteins. Also functions as a selenium delivery protein in the pathway for the biosynthesis of selenophosphate. The polypeptide is Cysteine desulfurase IscS (Salmonella schwarzengrund (strain CVM19633)).